Reading from the N-terminus, the 511-residue chain is ATP synthase subunit alpha (511 aa).

169–176 lines the ATP pocket; it reads GDRQTGKT.

The protein belongs to the ATPase alpha/beta chains family. As to quaternary structure, F-type ATPases have 2 components, CF(1) - the catalytic core - and CF(0) - the membrane proton channel. CF(1) has five subunits: alpha(3), beta(3), gamma(1), delta(1), epsilon(1). CF(0) has three main subunits: a(1), b(2) and c(9-12). The alpha and beta chains form an alternating ring which encloses part of the gamma chain. CF(1) is attached to CF(0) by a central stalk formed by the gamma and epsilon chains, while a peripheral stalk is formed by the delta and b chains.

The protein resides in the cell inner membrane. It carries out the reaction ATP + H2O + 4 H(+)(in) = ADP + phosphate + 5 H(+)(out). Its function is as follows. Produces ATP from ADP in the presence of a proton gradient across the membrane. The alpha chain is a regulatory subunit. The sequence is that of ATP synthase subunit alpha from Bartonella tribocorum (strain CIP 105476 / IBS 506).